A 718-amino-acid polypeptide reads, in one-letter code: Sodium/myo-inositol cotransporter (718 aa).

At 1-9 (MRAVLDTAD) the chain is on the extracellular side. Residues 10–29 (IAIVALYFILVMCIGFFAMW) traverse the membrane as a helical segment. Topologically, residues 30–38 (KSNRSTVSG) are cytoplasmic. A helical membrane pass occupies residues 39 to 57 (YFLAGRSMTWVAIGASLFV). Topologically, residues 58-86 (SNIGSEHFIGLAGSGAASGFAVGAWEFNA) are extracellular. The chain crosses the membrane as a helical span at residues 87 to 110 (LLLLQLLGWVFIPIYIRSGVYTMP). At 111 to 123 (EYLSKRFGGHRIQ) the chain is on the cytoplasmic side. A helical transmembrane segment spans residues 124–144 (VYFAALSLILYIFTKLSVDLY). Residues 145 to 157 (SGALFIQESLGWN) are Extracellular-facing. Residues 158–183 (LYVSVILLIGMTALLTVTGGLVAVIY) form a helical membrane-spanning segment. The Cytoplasmic portion of the chain corresponds to 184 to 186 (TDT). The chain crosses the membrane as a helical span at residues 187 to 205 (LQALLMIIGALTLMIISIM). Over 206–303 (EIGGFEEVKR…HAKGSTLMAG (98 aa)) the chain is Extracellular. The N-linked (GlcNAc...) asparagine glycan is linked to asparagine 232. The chain crosses the membrane as a helical span at residues 304–324 (FLKLLPMFIIVVPGMISRILF). The Cytoplasmic portion of the chain corresponds to 325 to 353 (TDDIACINPEHCMLVCGSRAGCSNIAYPR). Residues 354-376 (LVMKLVPVGLRGLMMAVMIAALM) traverse the membrane as a helical segment. Over 377–406 (SDLDSIFNSASTIFTLDVYKLIRKSASSRE) the chain is Extracellular. A helical transmembrane segment spans residues 407-430 (LMIVGRIFVAFMVVISIAWVPIIV). Topologically, residues 431-443 (EMQGGQMYLYIQE) are cytoplasmic. A helical membrane pass occupies residues 444 to 462 (VADYLTPPVAALFLLAIFW). Residues 463–510 (KRCNEQGAFYGGMAGFVLGAVRLILAFAYRAPECDQPDNRPGFIKDIH) lie on the Extracellular side of the membrane. Residues 511–532 (YMYVATGLFWVTGLITVIVSLL) traverse the membrane as a helical segment. The Cytoplasmic portion of the chain corresponds to 533 to 695 (TPPPTKEQIR…QMLEETRQVK (163 aa)). A phosphoserine mark is found at serine 594 and serine 632. A helical membrane pass occupies residues 696-716 (VILNIGLFAVCSLGIFMFVYF). Residues 717–718 (SL) lie on the Extracellular side of the membrane.

This sequence belongs to the sodium:solute symporter (SSF) (TC 2.A.21) family. As to quaternary structure, interacts with KCNQ2 (via the pore module). Interacts with KCNQ1; this interaction is direct. Forms coregulatory complexes with ion channels KCNQ2-KCNQ3 and KCNQ1-KCNE2.

It localises to the apical cell membrane. The protein resides in the basolateral cell membrane. The catalysed reaction is myo-inositol(out) + 2 Na(+)(out) = myo-inositol(in) + 2 Na(+)(in). It carries out the reaction scyllo-inositol(out) + 2 Na(+)(out) = scyllo-inositol(in) + 2 Na(+)(in). Functionally, electrogenic Na(+)-coupled sugar symporter that actively transports myo-inositol and its stereoisomer scyllo-inositol across the plasma membrane, with a Na(+) to sugar coupling ratio of 2:1. Maintains myo-inositol concentration gradient that defines cell volume and fluid balance during osmotic stress, in particular in the fetoplacental unit and central nervous system. Forms coregulatory complexes with voltage-gated K(+) ion channels, allosterically altering ion selectivity, voltage dependence and gating kinetics of the channel. In turn, K(+) efflux through the channel forms a local electrical gradient that modulates electrogenic Na(+)-coupled myo-inositol influx through the transporter. Associates with KCNQ1-KCNE2 channel in the apical membrane of choroid plexus epithelium and regulates the myo-inositol gradient between blood and cerebrospinal fluid with an impact on neuron excitability. Associates with KCNQ2-KCNQ3 channel altering ion selectivity, increasing Na(+) and Cs(+) permeation relative to K(+) permeation. Provides myo-inositol precursor for biosynthesis of phosphoinositides such as PI(4,5)P2, thus indirectly affecting the activity of phosphoinositide-dependent ion channels and Ca(2+) signaling upon osmotic stress. The sequence is that of Sodium/myo-inositol cotransporter from Homo sapiens (Human).